The primary structure comprises 225 residues: Tryptophan synthase beta chain (225 aa).

It belongs to the TrpB family. As to quaternary structure, tetramer of two alpha and two beta chains. The cofactor is pyridoxal 5'-phosphate.

The catalysed reaction is (1S,2R)-1-C-(indol-3-yl)glycerol 3-phosphate + L-serine = D-glyceraldehyde 3-phosphate + L-tryptophan + H2O. It participates in amino-acid biosynthesis; L-tryptophan biosynthesis; L-tryptophan from chorismate: step 5/5. The beta subunit is responsible for the synthesis of L-tryptophan from indole and L-serine. This is Tryptophan synthase beta chain (trpB) from Buchnera aphidicola subsp. Rhopalosiphum maidis.